The primary structure comprises 62 residues: Large ribosomal subunit protein bL28 (62 aa).

Positions 1–26 are disordered; the sequence is MARKCYVTGKSPKSGNNRSHALNKTK. Residues 11–20 show a composition bias toward polar residues; that stretch reads SPKSGNNRSH.

This sequence belongs to the bacterial ribosomal protein bL28 family.

This chain is Large ribosomal subunit protein bL28, found in Exiguobacterium sibiricum (strain DSM 17290 / CCUG 55495 / CIP 109462 / JCM 13490 / 255-15).